A 313-amino-acid chain; its full sequence is L-lactate dehydrogenase 1 (313 aa).

NAD(+) contacts are provided by valine 15, aspartate 36, arginine 41, and tyrosine 66. Substrate contacts are provided by residues glutamine 83, arginine 89, and 121–124 (NPVD). NAD(+) is bound by residues 119–121 (ASN) and serine 144. Substrate is bound at residue 149-152 (DTAR). 2 residues coordinate beta-D-fructose 1,6-bisphosphate: arginine 154 and histidine 169. Residue histidine 176 is the Proton acceptor of the active site. Tyrosine 218 carries the post-translational modification Phosphotyrosine. Threonine 227 is a substrate binding site.

Belongs to the LDH/MDH superfamily. LDH family. Homotetramer.

It localises to the cytoplasm. It catalyses the reaction (S)-lactate + NAD(+) = pyruvate + NADH + H(+). The protein operates within fermentation; pyruvate fermentation to lactate; (S)-lactate from pyruvate: step 1/1. With respect to regulation, allosterically activated by fructose 1,6-bisphosphate (FBP). Functionally, catalyzes the conversion of lactate to pyruvate. The chain is L-lactate dehydrogenase 1 from Listeria innocua serovar 6a (strain ATCC BAA-680 / CLIP 11262).